The primary structure comprises 334 residues: Heat-inducible transcription repressor HrcA (334 aa).

Belongs to the HrcA family.

In terms of biological role, negative regulator of class I heat shock genes (grpE-dnaK-dnaJ and groELS operons). Prevents heat-shock induction of these operons. The chain is Heat-inducible transcription repressor HrcA from Acidovorax ebreus (strain TPSY) (Diaphorobacter sp. (strain TPSY)).